We begin with the raw amino-acid sequence, 212 residues long: Uracil phosphoribosyltransferase (212 aa).

5-phospho-alpha-D-ribose 1-diphosphate is bound by residues arginine 78, arginine 103, and 130–138 (DPMLATGGS). Residues isoleucine 193 and 198 to 200 (GDA) contribute to the uracil site. Residue aspartate 199 coordinates 5-phospho-alpha-D-ribose 1-diphosphate.

This sequence belongs to the UPRTase family. Mg(2+) serves as cofactor.

The catalysed reaction is UMP + diphosphate = 5-phospho-alpha-D-ribose 1-diphosphate + uracil. It functions in the pathway pyrimidine metabolism; UMP biosynthesis via salvage pathway; UMP from uracil: step 1/1. With respect to regulation, allosterically activated by GTP. Its function is as follows. Catalyzes the conversion of uracil and 5-phospho-alpha-D-ribose 1-diphosphate (PRPP) to UMP and diphosphate. The chain is Uracil phosphoribosyltransferase from Pseudomonas aeruginosa (strain LESB58).